A 741-amino-acid polypeptide reads, in one-letter code: Pentatricopeptide repeat-containing protein At3g58590 (741 aa).

PPR repeat units lie at residues 48 to 78 (PVYV…MPER), 79 to 113 (NKVS…GYLP), 114 to 146 (NQST…GLFM), 148 to 178 (DAFV…MPFK), 179 to 213 (SLET…GASL), 214 to 248 (TESS…GLDC), 249 to 279 (EISV…AGSW), 280 to 314 (DIVS…GFSP), 315 to 349 (NQGT…GCET), 350 to 380 (GIVL…IRDK), 381 to 414 (NIVC…GFRP), 415 to 445 (TEYT…GYED), 446 to 481 (NDYV…SVVP), 483 to 508 (NIVA…LEQP), 509 to 543 (DTVS…NIRP), 544 to 578 (DKYT…DFSC), 580 to 610 (DTFV…TREK), 611 to 645 (NLIT…GFKP), 646 to 680 (DRVS…GVEP), and 681 to 715 (EMDH…ADAP).

The protein belongs to the PPR family. P subfamily.

The sequence is that of Pentatricopeptide repeat-containing protein At3g58590 from Arabidopsis thaliana (Mouse-ear cress).